The following is a 267-amino-acid chain: Tryptophan synthase alpha chain (267 aa).

Residues glutamate 43 and aspartate 54 each act as proton acceptor in the active site.

Belongs to the TrpA family. As to quaternary structure, tetramer of two alpha and two beta chains.

The catalysed reaction is (1S,2R)-1-C-(indol-3-yl)glycerol 3-phosphate + L-serine = D-glyceraldehyde 3-phosphate + L-tryptophan + H2O. Its pathway is amino-acid biosynthesis; L-tryptophan biosynthesis; L-tryptophan from chorismate: step 5/5. The alpha subunit is responsible for the aldol cleavage of indoleglycerol phosphate to indole and glyceraldehyde 3-phosphate. This is Tryptophan synthase alpha chain from Bacillus subtilis subsp. natto.